The following is a 334-amino-acid chain: Ornithine carbamoyltransferase (334 aa).

Carbamoyl phosphate contacts are provided by residues 56-59, glutamine 83, arginine 107, and 134-137; these read STRT and HPTQ. L-ornithine is bound by residues asparagine 168, aspartate 232, and 236 to 237; that span reads SM. Carbamoyl phosphate contacts are provided by residues 274 to 275 and arginine 320; that span reads CL.

Belongs to the aspartate/ornithine carbamoyltransferase superfamily. OTCase family.

It is found in the cytoplasm. It carries out the reaction carbamoyl phosphate + L-ornithine = L-citrulline + phosphate + H(+). Its pathway is amino-acid biosynthesis; L-arginine biosynthesis; L-arginine from L-ornithine and carbamoyl phosphate: step 1/3. Functionally, reversibly catalyzes the transfer of the carbamoyl group from carbamoyl phosphate (CP) to the N(epsilon) atom of ornithine (ORN) to produce L-citrulline. The sequence is that of Ornithine carbamoyltransferase from Escherichia coli (strain 55989 / EAEC).